Here is a 102-residue protein sequence, read N- to C-terminus: PqqA binding protein (102 aa).

The protein belongs to the PqqD family. In terms of assembly, monomer. Interacts with PqqE.

It participates in cofactor biosynthesis; pyrroloquinoline quinone biosynthesis. Its function is as follows. Functions as a PqqA binding protein and presents PqqA to PqqE, in the pyrroloquinoline quinone (PQQ) biosynthetic pathway. The chain is PqqA binding protein from Rhodopseudomonas palustris (strain TIE-1).